The primary structure comprises 143 residues: Nucleoside diphosphate kinase (143 aa).

Residues Lys11, Phe59, Arg87, Thr93, Arg104, and Asn114 each contribute to the ATP site. His117 serves as the catalytic Pros-phosphohistidine intermediate.

This sequence belongs to the NDK family. In terms of assembly, homotetramer. It depends on Mg(2+) as a cofactor.

Its subcellular location is the cytoplasm. The enzyme catalyses a 2'-deoxyribonucleoside 5'-diphosphate + ATP = a 2'-deoxyribonucleoside 5'-triphosphate + ADP. The catalysed reaction is a ribonucleoside 5'-diphosphate + ATP = a ribonucleoside 5'-triphosphate + ADP. Major role in the synthesis of nucleoside triphosphates other than ATP. The ATP gamma phosphate is transferred to the NDP beta phosphate via a ping-pong mechanism, using a phosphorylated active-site intermediate. The sequence is that of Nucleoside diphosphate kinase from Shewanella pealeana (strain ATCC 700345 / ANG-SQ1).